Reading from the N-terminus, the 316-residue chain is MNQLDGIKQFTTVVADSGDIESIRHYQPQDATTNPSLLLKAAGLEQYGHLIEDAIAWGKKHGGTQEQQVAAASDKLAVNFGAEILKSIPGRVSTEVDARLSFDKEKSIEKARHLVDLYQQQGVDKSRILIKLAATWEGIRAAGQLEKEGINCNLTLLFSFAQARACAEAGVYLISPFVGRIYDWYQARSPLEPYVVEEDPGVKSVRNIYDYFKQHRYETIVMGASFRRTEQILALTGCDRLTISPNLLKELKEKEEPVIRKLVPSSQMFHRPTPMTEAEFRWEHNQDAMAVEKLSEGIRLFAVDQRKLEDLLAAKL.

Lys-131 functions as the Schiff-base intermediate with substrate in the catalytic mechanism.

This sequence belongs to the transaldolase family. Type 1 subfamily. In terms of assembly, homodimer.

It localises to the cytoplasm. It catalyses the reaction D-sedoheptulose 7-phosphate + D-glyceraldehyde 3-phosphate = D-erythrose 4-phosphate + beta-D-fructose 6-phosphate. It functions in the pathway carbohydrate degradation; pentose phosphate pathway; D-glyceraldehyde 3-phosphate and beta-D-fructose 6-phosphate from D-ribose 5-phosphate and D-xylulose 5-phosphate (non-oxidative stage): step 2/3. Transaldolase is important for the balance of metabolites in the pentose-phosphate pathway. The sequence is that of Transaldolase A from Salmonella typhimurium (strain LT2 / SGSC1412 / ATCC 700720).